The sequence spans 300 residues: m7GpppN-mRNA hydrolase NUDT17 (300 aa).

The Nudix hydrolase domain occupies Ser88–Leu239. The Nudix box motif lies at Gly127–Gly148. Glu142 and Glu146 together coordinate Mg(2+).

This sequence belongs to the Nudix hydrolase family. Requires Mg(2+) as cofactor. The cofactor is Mn(2+).

It carries out the reaction a 5'-end (N(7)-methyl 5'-triphosphoguanosine)-ribonucleoside in mRNA + H2O = N(7)-methyl-GDP + a 5'-end phospho-ribonucleoside in mRNA + 2 H(+). Its function is as follows. Acts as a decapping enzyme capable of hydrolyzing monomethylated capped RNAs (in vitro). Hydrolyzes monomethylated capped RNA after alpha and beta phosphates to form N(7)-methyl-GDP. Shows low activity towards unmethylated capped RNA. This chain is m7GpppN-mRNA hydrolase NUDT17 (nudt17), found in Danio rerio (Zebrafish).